The sequence spans 262 residues: Protein BREAKING OF ASYMMETRY IN THE STOMATAL LINEAGE (262 aa).

Disordered regions lie at residues 32–107 (DEDG…QPPV) and 129–222 (KEGK…GRGS). Low complexity predominate over residues 37-47 (NNNGNTTNNNN). 2 consecutive short sequence motifs (nuclear localization signal) follow at residues 50 to 57 (FKRIKRKI) and 61 to 68 (KKKRSERK). Residues 51–66 (KRIKRKIKSTKKKRSE) are compositionally biased toward basic residues. Phosphoserine; by ASK7 occurs at positions 72, 85, 86, and 87. The span at 84–95 (RSSSVSPTTSGS) shows a compositional bias: low complexity. The residue at position 89 (Ser89) is a Phosphoserine; by ASK7 and MPK6. A Phosphothreonine; by ASK7 modification is found at Thr91. The segment covering 129–146 (KEGKQEKKETESSSEKSP) has biased composition (basic and acidic residues). Phosphoserine; by MPK6 is present on residues Ser145 and Ser168. Over residues 179-189 (NDNTSCQGTKD) the composition is skewed to polar residues. Residues 190-200 (VSSDVTERTKE) show a composition bias toward basic and acidic residues. Positions 222–262 (SFAFPILGVEWMGSPAKMPESDDLSPKKQKPVALGFQCCRF) are required for polarization at the cell cortex. The FxFP, required for cortical polarity formation motif lies at 223 to 226 (FAFP). Phosphoserine; by MPK6 is present on residues Ser235 and Ser246.

Component of a complex made of POLAR, BASL, ASK7/BIN2 and ASK3/SK12. Interacts with POLAR, ASK7/BIN2 and ASK3/SK12. Binds to YDA when phosphorylated. Interacts with MPK6, MPK3 and MKK5. Post-translationally, cortical localization of BASL requires phosphorylation mediated by MPK3 and MPK6. Phosphorylation promotes YDA binding. Phosphorylation status modulates subcellular mobility. In terms of tissue distribution, mostly expressed in stomatal lineage cells including asymmetrically dividing meristemoid mother cells (MMCs) and meristemoids, and, at lower levels, in their sisters. Also present in vasculature. Expressed at low levels in the epidermal pavement cells.

The protein localises to the cytoplasm. It is found in the nucleus. The protein resides in the cell cortex. It localises to the cell membrane. Its function is as follows. Regulates asymmetric cell division (ACD), especially in stomatal-lineage cells, probably by modulating accumulation and subcellular polarization of POLAR and SPCH. Mediates an attenuation of MAPK signaling upon polarization of POLAR and ASK7/BIN2 in stomatal lineage ground cells (SLGCs) undergoing ACD, and relieves BIN2 inhibition of SPCH in the nucleus. When phosphorylated, functions as a scaffold and recruits the MAPKKK YODA, MPK3 and MPK6 to spatially reorganize the MAPK signaling pathway at the cortex of cells undergoing ACD. Cortical polarization leads to elevated nuclear MPK6 signaling and lowered SPCH abundance in one of the two daughter cells, thus differentiating the two daughter cells after ACD. This Arabidopsis thaliana (Mouse-ear cress) protein is Protein BREAKING OF ASYMMETRY IN THE STOMATAL LINEAGE.